Consider the following 371-residue polypeptide: Queuine tRNA-ribosyltransferase (371 aa).

The Proton acceptor role is filled by D93. Substrate-binding positions include 93-97, D147, Q191, and G218; that span reads DSGGF. The RNA binding stretch occupies residues 249–255; that stretch reads GVGTPLD. Residue D268 is the Nucleophile of the active site. The segment at 273–277 is RNA binding; important for wobble base 34 recognition; sequence TRNAR. Positions 306, 308, 311, and 337 each coordinate Zn(2+).

The protein belongs to the queuine tRNA-ribosyltransferase family. In terms of assembly, homodimer. Within each dimer, one monomer is responsible for RNA recognition and catalysis, while the other monomer binds to the replacement base PreQ1. Zn(2+) serves as cofactor.

The catalysed reaction is 7-aminomethyl-7-carbaguanine + guanosine(34) in tRNA = 7-aminomethyl-7-carbaguanosine(34) in tRNA + guanine. The protein operates within tRNA modification; tRNA-queuosine biosynthesis. Catalyzes the base-exchange of a guanine (G) residue with the queuine precursor 7-aminomethyl-7-deazaguanine (PreQ1) at position 34 (anticodon wobble position) in tRNAs with GU(N) anticodons (tRNA-Asp, -Asn, -His and -Tyr). Catalysis occurs through a double-displacement mechanism. The nucleophile active site attacks the C1' of nucleotide 34 to detach the guanine base from the RNA, forming a covalent enzyme-RNA intermediate. The proton acceptor active site deprotonates the incoming PreQ1, allowing a nucleophilic attack on the C1' of the ribose to form the product. After dissociation, two additional enzymatic reactions on the tRNA convert PreQ1 to queuine (Q), resulting in the hypermodified nucleoside queuosine (7-(((4,5-cis-dihydroxy-2-cyclopenten-1-yl)amino)methyl)-7-deazaguanosine). This is Queuine tRNA-ribosyltransferase from Lawsonia intracellularis (strain PHE/MN1-00).